The primary structure comprises 452 residues: MTNIALLQSLGLFDARVPRYTSYPAAPVFSGAVGADFQAQAIEALDPAVPISVYIHVPFCERLCWFCACRTQGTQTLAPVEAYVGTLLQELELVKKHLPAGVKAGRLHWGGGTPTILSPELIHKLAQAIKAVIPFAEDYEFSVEIDPMMVDEPKIRALSEEGMNRASIGIQDFTDIVQSAIGREQPFENTRACVETLRRYGVHSLNTDLVYGLPHQNRESLAATIDKVLQLGPDRVAIFGYAHVPWMAKRQKLIDENVLPNDMERHELANLAAKMFTEGGFERIGIDHFARPDDSMAVAARSGKLRRNFQGYTDDTCPTLLGIGASSISKFEQGYLQNTAATAAYIKAIEEGRLPGYRGHRMTDEDYLHGRAIEMIMCEFRLDLPALRARFGEAAETMVPRITEAAAKFAPFITVDEAGSMSIEAEGRALTRMIARVFDAYETPEARYSQAS.

Positions 45–278 constitute a Radical SAM core domain; the sequence is LDPAVPISVY…ANLAAKMFTE (234 aa). An S-adenosyl-L-methionine-binding site is contributed by Tyr54. [4Fe-4S] cluster-binding residues include Cys60 and Cys64. An S-adenosyl-L-methionine-binding site is contributed by Phe66. Residue Cys67 participates in [4Fe-4S] cluster binding. Residues Gly111, 112 to 113, Glu144, Gln171, Arg183, Asp208, Ala242, and Ile328 contribute to the S-adenosyl-L-methionine site; that span reads GT.

The protein belongs to the anaerobic coproporphyrinogen-III oxidase family. As to quaternary structure, monomer. Requires [4Fe-4S] cluster as cofactor.

The protein resides in the cytoplasm. The enzyme catalyses coproporphyrinogen III + 2 S-adenosyl-L-methionine = protoporphyrinogen IX + 2 5'-deoxyadenosine + 2 L-methionine + 2 CO2. It participates in porphyrin-containing compound metabolism; protoporphyrin-IX biosynthesis; protoporphyrinogen-IX from coproporphyrinogen-III (AdoMet route): step 1/1. Its function is as follows. Involved in the heme and chlorophyll biosynthesis. Catalyzes the anaerobic oxidative decarboxylation of propionate groups of rings A and B of coproporphyrinogen III to yield the vinyl groups in protoporphyrinogen IX. This chain is Oxygen-independent coproporphyrinogen III oxidase (hemN), found in Cereibacter sphaeroides (strain ATCC 17025 / ATH 2.4.3) (Rhodobacter sphaeroides).